Here is a 156-residue protein sequence, read N- to C-terminus: MSRRHSAEKRQIIPDAKYGDVVLTKFMNSVMYEGKKSVAESIVYGAFDIIESRARVNPIEVFRAALDNVAPAIEVRSRRVGGATYQVPVEVRHERRQALAIRWLIQAARSRNDRTMVERLSAELLDAANNRGAAVKKREDTHRMAEANRAFSHYRW.

The protein belongs to the universal ribosomal protein uS7 family. As to quaternary structure, part of the 30S ribosomal subunit. Contacts proteins S9 and S11.

Its function is as follows. One of the primary rRNA binding proteins, it binds directly to 16S rRNA where it nucleates assembly of the head domain of the 30S subunit. Is located at the subunit interface close to the decoding center, probably blocks exit of the E-site tRNA. This chain is Small ribosomal subunit protein uS7, found in Methylobacterium nodulans (strain LMG 21967 / CNCM I-2342 / ORS 2060).